Here is a 471-residue protein sequence, read N- to C-terminus: ATP synthase subunit beta (471 aa).

Position 156-163 (156-163) interacts with ATP; sequence GGAGVGKT.

The protein belongs to the ATPase alpha/beta chains family. In terms of assembly, F-type ATPases have 2 components, CF(1) - the catalytic core - and CF(0) - the membrane proton channel. CF(1) has five subunits: alpha(3), beta(3), gamma(1), delta(1), epsilon(1). CF(0) has three main subunits: a(1), b(2) and c(9-12). The alpha and beta chains form an alternating ring which encloses part of the gamma chain. CF(1) is attached to CF(0) by a central stalk formed by the gamma and epsilon chains, while a peripheral stalk is formed by the delta and b chains.

It is found in the cell membrane. The enzyme catalyses ATP + H2O + 4 H(+)(in) = ADP + phosphate + 5 H(+)(out). In terms of biological role, produces ATP from ADP in the presence of a proton gradient across the membrane. The catalytic sites are hosted primarily by the beta subunits. This is ATP synthase subunit beta from Staphylococcus carnosus (strain TM300).